The following is a 352-amino-acid chain: Uroporphyrinogen decarboxylase (352 aa).

Substrate-binding positions include 27–31 (RQAGR), Asp77, Tyr154, Thr209, and His325.

It belongs to the uroporphyrinogen decarboxylase family. Homodimer.

It localises to the cytoplasm. It carries out the reaction uroporphyrinogen III + 4 H(+) = coproporphyrinogen III + 4 CO2. It participates in porphyrin-containing compound metabolism; protoporphyrin-IX biosynthesis; coproporphyrinogen-III from 5-aminolevulinate: step 4/4. Catalyzes the decarboxylation of four acetate groups of uroporphyrinogen-III to yield coproporphyrinogen-III. The chain is Uroporphyrinogen decarboxylase from Legionella pneumophila (strain Paris).